We begin with the raw amino-acid sequence, 393 residues long: Phosphoglycerate kinase (393 aa).

Substrate contacts are provided by residues 21-23, 59-62, Arg118, and Arg151; these read DFN and HLGR. ATP-binding positions include Lys201, Glu323, and 349–352; that span reads GGDT.

Belongs to the phosphoglycerate kinase family. As to quaternary structure, monomer.

The protein localises to the cytoplasm. The catalysed reaction is (2R)-3-phosphoglycerate + ATP = (2R)-3-phospho-glyceroyl phosphate + ADP. It functions in the pathway carbohydrate degradation; glycolysis; pyruvate from D-glyceraldehyde 3-phosphate: step 2/5. In Pelotomaculum thermopropionicum (strain DSM 13744 / JCM 10971 / SI), this protein is Phosphoglycerate kinase.